A 101-amino-acid chain; its full sequence is uncharacterized protein (101 aa).

The signal sequence occupies residues 1-23; the sequence is MERRTGVVLIIFVTFCEAMMARA. Residues 38 to 58 traverse the membrane as a helical segment; sequence FLLFIIHTSCTMVAFIIGNLA.

Its subcellular location is the host membrane. This is an uncharacterized protein from Cryphonectria parasitica (Chestnut blight fungus).